The sequence spans 205 residues: MRPLTPRQTEILELIKRNIADTGMPPTRAEIATRLGFKSANAAEEHLKALAKKGCIEIMPGTSRGIRLTQEDAEVELGLPLIGQVAAGEPILAQEHVEQYFQVDPHMFKPAANFLLRVRGDSMKNIGILEGDLLAVHKMQEAKNGQVVVARVEDDVTVKRFEKKGNVIYLHAENEDYAPIKVDLTCQSLTIEGLAVGVIRNGAWL.

The segment at residues 28–48 is a DNA-binding region (H-T-H motif); it reads RAEIATRLGFKSANAAEEHLK. Residues serine 122 and lysine 159 each act as for autocatalytic cleavage activity in the active site.

It belongs to the peptidase S24 family. As to quaternary structure, homodimer.

It carries out the reaction Hydrolysis of Ala-|-Gly bond in repressor LexA.. Functionally, represses a number of genes involved in the response to DNA damage (SOS response), including recA and lexA. In the presence of single-stranded DNA, RecA interacts with LexA causing an autocatalytic cleavage which disrupts the DNA-binding part of LexA, leading to derepression of the SOS regulon and eventually DNA repair. In Shewanella denitrificans (strain OS217 / ATCC BAA-1090 / DSM 15013), this protein is LexA repressor.